The primary structure comprises 62 residues: Large ribosomal subunit protein bL32 (62 aa).

The segment covering 1–19 has biased composition (basic residues); the sequence is MPNPKRRHSKARTGNRRAH. The interval 1–23 is disordered; the sequence is MPNPKRRHSKARTGNRRAHDHLS.

The protein belongs to the bacterial ribosomal protein bL32 family.

This chain is Large ribosomal subunit protein bL32, found in Koribacter versatilis (strain Ellin345).